We begin with the raw amino-acid sequence, 154 residues long: Ribosome maturation factor RimP (154 aa).

It belongs to the RimP family.

The protein resides in the cytoplasm. Functionally, required for maturation of 30S ribosomal subunits. The protein is Ribosome maturation factor RimP of Thioalkalivibrio sulfidiphilus (strain HL-EbGR7).